The primary structure comprises 919 residues: Lipoxygenase 3, chloroplastic (919 aa).

A chloroplast-targeting transit peptide spans 1-52; it reads MALAKELMGYPLITERSSLVSSASHFKKRTQSTQFSINPFDRRPRKTKSGVV. The PLAT domain occupies 86 to 222; the sequence is VRAVVTVRNK…DHPDKRIFFT (137 aa). The 695-residue stretch at 225-919 folds into the Lipoxygenase domain; the sequence is PYLPNETPSG…CRGVPNSVSI (695 aa). Residues 272–310 form a disordered region; sequence PDKSSELSRPKLGGKEVPYPRRCRTGRQSTVSDKDAESR. Fe cation is bound by residues His578, His583, His770, Asn774, and Ile919.

This sequence belongs to the lipoxygenase family. Requires Fe cation as cofactor. In terms of tissue distribution, expressed in roots and leaves.

It localises to the plastid. Its subcellular location is the chloroplast. The enzyme catalyses (9Z,12Z)-octadecadienoate + O2 = (13S)-hydroperoxy-(9Z,11E)-octadecadienoate. It carries out the reaction (9Z,12Z,15Z)-octadecatrienoate + O2 = (13S)-hydroperoxy-(9Z,11E,15Z)-octadecatrienoate. The protein operates within lipid metabolism; oxylipin biosynthesis. Functionally, 13S-lipoxygenase that can use linolenic acid as substrates. Plant lipoxygenases may be involved in a number of diverse aspects of plant physiology including growth and development, pest resistance, and senescence or responses to wounding. Catalyzes the hydroperoxidation of lipids containing a cis,cis-1,4-pentadiene structure. This chain is Lipoxygenase 3, chloroplastic (LOX3), found in Arabidopsis thaliana (Mouse-ear cress).